A 462-amino-acid polypeptide reads, in one-letter code: UDP-N-acetylmuramoylalanine--D-glutamate ligase (462 aa).

117-123 (GTNGKTT) serves as a coordination point for ATP.

Belongs to the MurCDEF family.

Its subcellular location is the cytoplasm. It carries out the reaction UDP-N-acetyl-alpha-D-muramoyl-L-alanine + D-glutamate + ATP = UDP-N-acetyl-alpha-D-muramoyl-L-alanyl-D-glutamate + ADP + phosphate + H(+). The protein operates within cell wall biogenesis; peptidoglycan biosynthesis. In terms of biological role, cell wall formation. Catalyzes the addition of glutamate to the nucleotide precursor UDP-N-acetylmuramoyl-L-alanine (UMA). The protein is UDP-N-acetylmuramoylalanine--D-glutamate ligase of Parasynechococcus marenigrum (strain WH8102).